The primary structure comprises 957 residues: Glycine dehydrogenase (decarboxylating) (957 aa).

An N6-(pyridoxal phosphate)lysine modification is found at Lys-708.

Belongs to the GcvP family. In terms of assembly, the glycine cleavage system is composed of four proteins: P, T, L and H. Pyridoxal 5'-phosphate is required as a cofactor.

It carries out the reaction N(6)-[(R)-lipoyl]-L-lysyl-[glycine-cleavage complex H protein] + glycine + H(+) = N(6)-[(R)-S(8)-aminomethyldihydrolipoyl]-L-lysyl-[glycine-cleavage complex H protein] + CO2. The glycine cleavage system catalyzes the degradation of glycine. The P protein binds the alpha-amino group of glycine through its pyridoxal phosphate cofactor; CO(2) is released and the remaining methylamine moiety is then transferred to the lipoamide cofactor of the H protein. The chain is Glycine dehydrogenase (decarboxylating) from Escherichia coli (strain K12 / MC4100 / BW2952).